The primary structure comprises 369 residues: 4-hydroxy-3-methylbut-2-en-1-yl diphosphate synthase (flavodoxin) (369 aa).

4 residues coordinate [4Fe-4S] cluster: Cys270, Cys273, Cys305, and Glu312.

Belongs to the IspG family. Requires [4Fe-4S] cluster as cofactor.

The catalysed reaction is (2E)-4-hydroxy-3-methylbut-2-enyl diphosphate + oxidized [flavodoxin] + H2O + 2 H(+) = 2-C-methyl-D-erythritol 2,4-cyclic diphosphate + reduced [flavodoxin]. Its pathway is isoprenoid biosynthesis; isopentenyl diphosphate biosynthesis via DXP pathway; isopentenyl diphosphate from 1-deoxy-D-xylulose 5-phosphate: step 5/6. Its function is as follows. Converts 2C-methyl-D-erythritol 2,4-cyclodiphosphate (ME-2,4cPP) into 1-hydroxy-2-methyl-2-(E)-butenyl 4-diphosphate. In Pseudomonas fluorescens (strain ATCC BAA-477 / NRRL B-23932 / Pf-5), this protein is 4-hydroxy-3-methylbut-2-en-1-yl diphosphate synthase (flavodoxin).